We begin with the raw amino-acid sequence, 188 residues long: MAVANSSPVNPVVFFDVSIGGQEVGRMKIELFADVVPKTAENFRQFCTGEFRKDGVPIGYKGSTFHRVIKDFMIQGGDFVNGDGTGVASIYRGPFADENFKLRHSAPGLLSMANSGPSTNGCQFFITCSKCDWLDGKHVVFGKIIDGLLVMRKIEFQAPLGKRVQAWTHSLTCPALTGILALILMPTE.

Residue A2 is modified to N-acetylalanine. One can recognise a PPIase cyclophilin-type domain in the interval 14-176; the sequence is FFDVSIGGQE…WTHSLTCPAL (163 aa).

This sequence belongs to the cyclophilin-type PPIase family. PPIase H subfamily. In terms of assembly, interacts directly with PRPF4. Part of a heteromeric complex containing PPIH, PRPF3 and PRPF4 that is stable in the absence of RNA. Component of the U4/U6-U5 tri-snRNP complex composed of the U4, U6 and U5 snRNAs and at least PRPF3, PRPF4, PRPF6, PRPF8, PRPF31, SNRNP200, TXNL4A, SNRNP40, DDX23, CD2BP2, PPIH, SNU13, EFTUD2, SART1 and USP39. Heterodimer with PRPF18. Heterodimer with PRPF18.

It localises to the nucleus speckle. The protein localises to the cytoplasm. It carries out the reaction [protein]-peptidylproline (omega=180) = [protein]-peptidylproline (omega=0). Its activity is regulated as follows. Inhibited by cyclosporin A. In terms of biological role, PPIase that catalyzes the cis-trans isomerization of proline imidic peptide bonds in oligopeptides and may therefore assist protein folding. Participates in pre-mRNA splicing. May play a role in the assembly of the U4/U5/U6 tri-snRNP complex, one of the building blocks of the spliceosome. May act as a chaperone. This chain is Peptidyl-prolyl cis-trans isomerase H (Ppih), found in Mus musculus (Mouse).